The following is a 386-amino-acid chain: MDIVLEICDYYLFDKVYADVFPKDGPVHEYLKPAIQSFSEINFPKLQNWDSFDTNSTLISSNNFNISNVNPATIPGYLLSKIASYQDKSEIYGLAPKFFPATEFIDTSFLSRSNIFREVLSLFIITTLFGWLLYFIVAYLSYVFVFDKKIFNHPRYLKNQMSLEIKRATSAIPVMVLLTIPFFLLELHGYSFLYEEINESTGGYKAILWQIPKFILFTDCGIYFLHRWLHWPSVYKALHKPHHKWIVCTPFASHAFHPVDGFFQSLPYHLYPLLFPLHKVLYLLLFTFVNFWTVMIHDGSYWSNDPVVNGTACHTVHHLYFNYNYGQFTTLWDRLGNSYRRPDDSLFVKDQKKEEEKKIWKEQTRQMEEIRGEVEGKVDDREYIDQ.

3 consecutive transmembrane segments (helical) span residues Val-119–Tyr-139, Ile-172–Phe-192, and Ala-206–His-226. The 124-residue stretch at Phe-214–Asn-337 folds into the Fatty acid hydroxylase domain. Positions His-226–His-230 match the Histidine box-1 motif. Residues His-239–His-243 carry the Histidine box-2 motif. Residues Pro-272–Trp-292 form a helical membrane-spanning segment. A Histidine box-3 motif is present at residues His-314–His-318.

Belongs to the sterol desaturase family. The cofactor is Fe cation.

Its subcellular location is the endoplasmic reticulum membrane. It catalyses the reaction a Delta(7)-sterol + 2 Fe(II)-[cytochrome b5] + O2 + 2 H(+) = a Delta(5),Delta(7)-sterol + 2 Fe(III)-[cytochrome b5] + 2 H2O. Its pathway is steroid metabolism; ergosterol biosynthesis; ergosterol from zymosterol: step 3/5. Functionally, catalyzes the introduction of a C-5 double bond in the B ring of ergosterol. May contribute to the regulation of ergosterol biosynthesis. The sequence is that of Delta(7)-sterol 5(6)-desaturase (ERG3) from Candida dubliniensis (strain CD36 / ATCC MYA-646 / CBS 7987 / NCPF 3949 / NRRL Y-17841) (Yeast).